A 269-amino-acid chain; its full sequence is MEQSVANLVDMRDVSFTRGNRCIFDNISLTVPRGKITAIMGPSGIGKTTLLRLIGGQIAPDHGEILFDGENIPAMSRSRLYTVRKRMSMLFQSGALFTDMNVFDNVAYPLREHTQLPAPLLHSTVMMKLEAVGLRGAAKLMPSELSGGMARRAALARAIALEPDLIMFDEPFVGQDPITMGVLVKLISELNSALGVTCVVVSHDVPEVLSIADHAWILADKKIVAHGSAQALQANPDPRVRQFLDGIADGPVPFRYPAGDYHADLLPGS.

Residues 9 to 245 enclose the ABC transporter domain; that stretch reads VDMRDVSFTR…PDPRVRQFLD (237 aa). 41-48 lines the ATP pocket; sequence GPSGIGKT.

This sequence belongs to the ABC transporter superfamily. MlaF family. The complex is composed of two ATP-binding proteins (MlaF), two transmembrane proteins (MlaE), two cytoplasmic solute-binding proteins (MlaB) and six periplasmic solute-binding proteins (MlaD).

It is found in the cell inner membrane. Functionally, part of the ABC transporter complex MlaFEDB, which is involved in a phospholipid transport pathway that maintains lipid asymmetry in the outer membrane by retrograde trafficking of phospholipids from the outer membrane to the inner membrane. Responsible for energy coupling to the transport system. This chain is Intermembrane phospholipid transport system ATP-binding protein MlaF, found in Escherichia coli O157:H7.